A 326-amino-acid chain; its full sequence is MDNARMNSFLDYSIINGETGTCSSRSYHADQGITTYQSCAVSNNNCNADDRYIVSRSVQIGAPPPHHHHHQSNYTHPNNLGISYSAHPNCGAGYPAQSFNTGYSHHYSLNQETDGNGGYPQCAPAVYPGNIASAISPHHHSYGGMVGSGQYPHHPYGQEQQGLALAAGCHSLSPVHGSHQEACCSPSAETPPPAQTFDWMKVKRNPPKTGKAGEYGFAGQPNTVRTNFTTKQLTELEKEFHFNKYLTRARRVEIAAALQLNETQVKIWFQNRRMKQKKREKEGLTSASPATPGSEANTEDTSDKCNSTSSTPSPSSSTSETINTSG.

The short motif at 196–201 is the Antp-type hexapeptide element; that stretch reads TFDWMK. The segment at residues 221 to 280 is a DNA-binding region (homeobox); sequence PNTVRTNFTTKQLTELEKEFHFNKYLTRARRVEIAAALQLNETQVKIWFQNRRMKQKKRE. The interval 273-326 is disordered; the sequence is RMKQKKREKEGLTSASPATPGSEANTEDTSDKCNSTSSTPSPSSSTSETINTSG. The span at 285–296 shows a compositional bias: polar residues; the sequence is TSASPATPGSEA. The span at 306 to 326 shows a compositional bias: low complexity; the sequence is NSTSSTPSPSSSTSETINTSG.

This sequence belongs to the Antp homeobox family. Labial subfamily.

It localises to the nucleus. In terms of biological role, sequence-specific transcription factor. Part of a developmental regulatory system that provides cells with specific positional identities on the anterior-posterior axis. Acts on the anterior body structures. Seems to act in the maintenance and/or generation of hindbrain segments. In Heterodontus francisci (Horn shark), this protein is Homeobox protein Hox-A1 (HOXA1).